We begin with the raw amino-acid sequence, 2262 residues long: Protein Ycf2 (2262 aa).

1607–1614 (GFIGTGRS) contributes to the ATP binding site.

This sequence belongs to the Ycf2 family.

It localises to the plastid. The protein resides in the chloroplast stroma. Probable ATPase of unknown function. Its presence in a non-photosynthetic plant (Epifagus virginiana) and experiments in tobacco indicate that it has an essential function which is probably not related to photosynthesis. The chain is Protein Ycf2 from Nuphar advena (Common spatterdock).